We begin with the raw amino-acid sequence, 200 residues long: Small ribosomal subunit protein uS4 (200 aa).

In terms of domain architecture, S4 RNA-binding spans 92 to 155 (SRLDAVVYSL…QNLDIIKESV (64 aa)).

This sequence belongs to the universal ribosomal protein uS4 family. In terms of assembly, part of the 30S ribosomal subunit. Contacts protein S5. The interaction surface between S4 and S5 is involved in control of translational fidelity.

Its function is as follows. One of the primary rRNA binding proteins, it binds directly to 16S rRNA where it nucleates assembly of the body of the 30S subunit. In terms of biological role, with S5 and S12 plays an important role in translational accuracy. In Staphylococcus epidermidis (strain ATCC 35984 / DSM 28319 / BCRC 17069 / CCUG 31568 / BM 3577 / RP62A), this protein is Small ribosomal subunit protein uS4.